Consider the following 211-residue polypeptide: Uracil phosphoribosyltransferase (211 aa).

5-phospho-alpha-D-ribose 1-diphosphate is bound by residues R78, R103, and 130-138; that span reads DPMLATGGT. Uracil contacts are provided by residues I195 and 200 to 202; that span reads GDA. D201 lines the 5-phospho-alpha-D-ribose 1-diphosphate pocket.

The protein belongs to the UPRTase family. Mg(2+) serves as cofactor.

The enzyme catalyses UMP + diphosphate = 5-phospho-alpha-D-ribose 1-diphosphate + uracil. It participates in pyrimidine metabolism; UMP biosynthesis via salvage pathway; UMP from uracil: step 1/1. With respect to regulation, allosterically activated by GTP. Its function is as follows. Catalyzes the conversion of uracil and 5-phospho-alpha-D-ribose 1-diphosphate (PRPP) to UMP and diphosphate. In Pseudarthrobacter chlorophenolicus (strain ATCC 700700 / DSM 12829 / CIP 107037 / JCM 12360 / KCTC 9906 / NCIMB 13794 / A6) (Arthrobacter chlorophenolicus), this protein is Uracil phosphoribosyltransferase.